Here is a 307-residue protein sequence, read N- to C-terminus: Pantothenate kinase (307 aa).

87–94 provides a ligand contact to ATP; it reads GSVAVGKS.

This sequence belongs to the prokaryotic pantothenate kinase family.

The protein resides in the cytoplasm. The enzyme catalyses (R)-pantothenate + ATP = (R)-4'-phosphopantothenate + ADP + H(+). It participates in cofactor biosynthesis; coenzyme A biosynthesis; CoA from (R)-pantothenate: step 1/5. In Vibrio vulnificus (strain CMCP6), this protein is Pantothenate kinase.